We begin with the raw amino-acid sequence, 576 residues long: NADH-quinone oxidoreductase subunit C/D (576 aa).

Residues 1 to 176 (MAWISLEKAK…NLEGLFNYDR (176 aa)) form an NADH dehydrogenase I subunit C region. The tract at residues 200 to 576 (SQIVLNWGPL…IDPVVGETDR (377 aa)) is NADH dehydrogenase I subunit D.

The protein in the N-terminal section; belongs to the complex I 30 kDa subunit family. This sequence in the C-terminal section; belongs to the complex I 49 kDa subunit family. In terms of assembly, NDH-1 is composed of 13 different subunits. Subunits NuoB, CD, E, F, and G constitute the peripheral sector of the complex.

The protein localises to the cell inner membrane. It catalyses the reaction a quinone + NADH + 5 H(+)(in) = a quinol + NAD(+) + 4 H(+)(out). NDH-1 shuttles electrons from NADH, via FMN and iron-sulfur (Fe-S) centers, to quinones in the respiratory chain. The immediate electron acceptor for the enzyme in this species is believed to be ubiquinone. Couples the redox reaction to proton translocation (for every two electrons transferred, four hydrogen ions are translocated across the cytoplasmic membrane), and thus conserves the redox energy in a proton gradient. This Sulfurihydrogenibium sp. (strain YO3AOP1) protein is NADH-quinone oxidoreductase subunit C/D.